The following is a 522-amino-acid chain: Hydroxymethylglutaryl-CoA synthase, cytoplasmic (522 aa).

The (3S)-3-hydroxy-3-methylglutaryl-CoA site is built by aspartate 43 and alanine 44. Residue glutamate 95 is the Proton donor/acceptor of the active site. The (3S)-3-hydroxy-3-methylglutaryl-CoA site is built by cysteine 129, asparagine 167, threonine 171, serine 221, histidine 264, lysine 273, asparagine 344, and serine 378. The Acyl-thioester intermediate role is filled by cysteine 129. Histidine 264 (proton donor/acceptor) is an active-site residue.

The protein belongs to the thiolase-like superfamily. HMG-CoA synthase family. Homodimer.

It localises to the cytoplasm. It carries out the reaction acetoacetyl-CoA + acetyl-CoA + H2O = (3S)-3-hydroxy-3-methylglutaryl-CoA + CoA + H(+). Its pathway is metabolic intermediate biosynthesis; (R)-mevalonate biosynthesis; (R)-mevalonate from acetyl-CoA: step 2/3. In terms of biological role, catalyzes the condensation of acetyl-CoA with acetoacetyl-CoA to form HMG-CoA, which is converted by HMG-CoA reductase (HMGCR) into mevalonate, a precursor for cholesterol synthesis. The sequence is that of Hydroxymethylglutaryl-CoA synthase, cytoplasmic (HMGCS1) from Gallus gallus (Chicken).